We begin with the raw amino-acid sequence, 325 residues long: Prenytransferase adrG (325 aa).

The next 7 helical transmembrane spans lie at 47 to 67 (LVGV…AVLL), 71 to 91 (MLLS…DDLI), 117 to 137 (ALLL…FLPW), 163 to 183 (PQIT…SLGL), 189 to 209 (MTPT…IDVI), 236 to 256 (LLSY…GVLT), and 258 to 278 (LGLP…WVLL).

It belongs to the UbiA prenyltransferase family. Requires Mg(2+) as cofactor.

The protein localises to the membrane. The catalysed reaction is 3,5-dimethylorsellinate + (2E,6E)-farnesyl diphosphate = (3R)-3-farnesyl-6-hydroxy-2,3,5-trimethyl-4-oxocyclohexa-1,5-diene-1-carboxylate + diphosphate + H(+). The protein operates within secondary metabolite biosynthesis; terpenoid biosynthesis. Functionally, prenytransferase; part of the gene cluster that mediates the biosynthesis of andrastins, meroterpenoid compounds that exhibit inhibitory activity against ras farnesyltransferase, suggesting that they could be promising leads for antitumor agents. The first step of the pathway is the synthesis of 3,5-dimethylorsellinic acid (DMOA) by the polyketide synthase adrD via condensation of one acetyl-CoA starter unit with 3 malonyl-CoA units and 2 methylations. DMAO is then converted to farnesyl-DMAO by the prenyltransferase adrG. The methyltransferase adrK catalyzes the methylation of the carboxyl group of farnesyl-DMAO to farnesyl-DMAO methyl ester which is further converted to epoxyfarnesyl-DMAO methyl ester by the FAD-dependent monooxygenase adrH. The terpene cyclase adrI then catalyzes the carbon skeletal rearrangement to generate the andrastin E, the first compound in the pathway having the andrastin scaffold, with the tetracyclic ring system. The post-cyclization tailoring enzymes adrF, adrE, adrJ, and adrA, are involved in the conversion of andrastin E into andrastin A. The short chain dehydrogenase adrF is responsible for the oxidation of the C-3 a hydroxyl group of andrastin E to yield the corresponding ketone, andrastin D. The ketoreductase adrE stereoselectively reduces the carbonyl moiety to reverse the stereochemistry of the C-3 position to yield andrastin F. The acetyltransferase adrJ is the acetyltransferase that attaches the acetyl group to the C-3 hydroxyl group of andrastin F to yield andrastin C. Finally, the cytochrome P450 monooxygenase adrA catalyzes two sequential oxidation reactions of the C-23 methyl group, to generate the corresponding alcohol andrastin B, and aldehyde andrastin A. The sequence is that of Prenytransferase adrG from Penicillium rubens (strain ATCC 28089 / DSM 1075 / NRRL 1951 / Wisconsin 54-1255) (Penicillium chrysogenum).